The chain runs to 1535 residues: Lysine-specific demethylase 5D (1535 aa).

The 42-residue stretch at 14-55 (CPVFEPSWAEFQDPLGYIAKIRPIAEKSGICKIRPPADWQPP) folds into the JmjN domain. Positions 79 to 169 (TRVKLNYLDQ…IIYPYEMFQS (91 aa)) constitute an ARID domain. The interval 192–227 (PHSIPLRQSVQPSKFSSYSRRAKRLQPDPEPTEEDI) is disordered. The segment covering 197 to 210 (LRQSVQPSKFSSYS) has biased composition (polar residues). Glycyl lysine isopeptide (Lys-Gly) (interchain with G-Cter in SUMO2) cross-links involve residues Lys205, Lys229, Lys244, and Lys272. A phosphoserine mark is found at Ser291 and Ser307. Residues 314-364 (SYICQVCSRGDEDDKLLFCDGCDDNYHIFCLLPPLPEIPRGIWRCPKCILA) form a PHD-type 1 zinc finger. Tyr430 lines the 2-oxoglutarate pocket. The JmjC domain maps to 458-624 (EYATSGWNLN…AGRQCIEHYR (167 aa)). The Fe cation site is built by His504 and Glu506. Positions 512, 514, and 522 each coordinate 2-oxoglutarate. Position 592 (His592) interacts with Fe cation. The C5HC2 zinc finger occupies 697–749 (CIKCKTTCFLSALACYDCPDGLVCLSHINDLCKCSSSRQYLRYRYTLDELPTM). Ser884 carries the post-translational modification Phosphoserine. The PHD-type 2 zinc finger occupies 1174–1235 (ICVCGQVPAG…DTKFLCPLCM (62 aa)). Phosphoserine is present on Ser1342. The disordered stretch occupies residues 1425 to 1519 (HQGSRTRSRA…KDSGSSAACP (95 aa)). The segment covering 1428–1441 (SRTRSRALERRRRQ) has biased composition (basic residues). Positions 1473 to 1487 (GREEEHYQEKADREN) are enriched in basic and acidic residues. A compositionally biased stretch (polar residues) spans 1490 to 1517 (LTPSTDHSPSLKGNQNSLQHKDSGSSAA).

The protein belongs to the JARID1 histone demethylase family. Interacts withPCGF6, MSH5, ZMYND8, AR. L-ascorbate is required as a cofactor. It depends on Fe(2+) as a cofactor.

It is found in the nucleus. It catalyses the reaction N(6),N(6),N(6)-trimethyl-L-lysyl(4)-[histone H3] + 3 2-oxoglutarate + 3 O2 = L-lysyl(4)-[histone H3] + 3 formaldehyde + 3 succinate + 3 CO2. In terms of biological role, histone demethylase that specifically demethylates 'Lys-4' of histone H3, thereby playing a central role in histone code. Does not demethylate histone H3 'Lys-9', H3 'Lys-27', H3 'Lys-36', H3 'Lys-79' or H4 'Lys-20'. Demethylates trimethylated and dimethylated but not monomethylated H3 'Lys-4'. May play a role in spermatogenesis. Involved in transcriptional repression of diverse metastasis-associated genes; in this function seems to cooperate with ZMYND8. Suppresses prostate cancer cell invasion. Regulates androgen receptor (AR) transcriptional activity by demethylating H3K4me3 active transcription marks. In Pan troglodytes (Chimpanzee), this protein is Lysine-specific demethylase 5D (KDM5D).